We begin with the raw amino-acid sequence, 260 residues long: uncharacterized protein (260 aa).

Positions 6–239 constitute a Radical SAM core domain; it reads AGVRSGVVVS…VAVAETYLPN (234 aa).

This is an uncharacterized protein from Sinorhizobium fredii (strain NBRC 101917 / NGR234).